Reading from the N-terminus, the 381-residue chain is 40-kDa huntingtin-associated protein (381 aa).

Ala-2 carries the N-acetylalanine modification. Residues 34–36 (KKR) carry the Nuclear localization signal motif. The disordered stretch occupies residues 213–260 (EHGGHPVQQPELPQQLPSVPQPSLPGPQPRPVLGSTLPLPLPPDHAPG). Residues 218-230 (PVQQPELPQQLPS) are compositionally biased toward low complexity. Pro residues predominate over residues 231-242 (VPQPSLPGPQPR).

Interacts with HTT (via C-terminus). Interacts with RAB5A. Found in a complex with F8A1/F8A2/F8A3, HTT and RAB5A; mediates the recruitment of HTT by RAB5A onto early endosomes.

Its subcellular location is the cytoplasm. The protein localises to the nucleus. It localises to the early endosome. It is found in the nuclear body. Functionally, RAB5A effector molecule that is involved in vesicular trafficking of early endosomes. Mediates the recruitment of HTT by RAB5A onto early endosomes. The HTT-F8A1/F8A2/F8A3-RAB5A complex stimulates early endosomal interaction with actin filaments and inhibits interaction with microtubules, leading to the reduction of endosome motility. The chain is 40-kDa huntingtin-associated protein (F8a1) from Rattus norvegicus (Rat).